The chain runs to 197 residues: Putative methyltransferase Mtx subunit A (197 aa).

It belongs to the MtrA family. In terms of assembly, may be part of a complex composed of 3 subunits; MtxA, MtxH and MtxX.

The sequence is that of Putative methyltransferase Mtx subunit A (mtxA) from Methanosarcina barkeri (strain Fusaro / DSM 804).